Reading from the N-terminus, the 262-residue chain is Protein N-terminal and lysine N-methyltransferase EFM7 (262 aa).

S-adenosyl-L-methionine-binding positions include W59, 86–88, D108, W143, and S171; that span reads GAA.

Belongs to the class I-like SAM-binding methyltransferase superfamily. EFM7 family.

The protein localises to the cytoplasm. S-adenosyl-L-methionine-dependent protein methyltransferase that trimethylates the N-terminal glycine 'Gly-2' of elongation factor 1-alpha, before also catalyzing the mono- and dimethylation of 'Lys-3'. This is Protein N-terminal and lysine N-methyltransferase EFM7 from Candida albicans (strain SC5314 / ATCC MYA-2876) (Yeast).